The sequence spans 150 residues: MATVYDVPGDLLVERVAQRLKEIPEIKPPEWAPFVKTGRHKERLPEQEDWWYYRVASILRRVYIDGPVGIERLRTYYGGRKNRGHAPERFYKAGGSIIRKALQQLEAAGFIEKVPGKGRVVTPKGRSFLDKIATELKKELEEIIPELKKY.

Belongs to the eukaryotic ribosomal protein eS19 family. Part of the 30S ribosomal subunit.

Functionally, may be involved in maturation of the 30S ribosomal subunit. The sequence is that of Small ribosomal subunit protein eS19 from Pyrococcus horikoshii (strain ATCC 700860 / DSM 12428 / JCM 9974 / NBRC 100139 / OT-3).